A 334-amino-acid chain; its full sequence is Glyoxylate reductase (334 aa).

NADP(+) is bound by residues 158 to 161 (FGRI), 180 to 182 (SRT), and 239 to 241 (IAR). Residues R241 and E270 contribute to the active site. The Proton donor role is filled by H288. 288–290 (HIG) contributes to the NADP(+) binding site.

Belongs to the D-isomer specific 2-hydroxyacid dehydrogenase family. GyaR subfamily. As to quaternary structure, homodimer.

The protein resides in the cytoplasm. It catalyses the reaction glycolate + NAD(+) = glyoxylate + NADH + H(+). The chain is Glyoxylate reductase from Thermococcus onnurineus (strain NA1).